Here is a 206-residue protein sequence, read N- to C-terminus: Octanoyltransferase (206 aa).

The BPL/LPL catalytic domain occupies 30-206; the sequence is PETNDEIWLV…EFVTLLNNSI (177 aa). Residues 69–76, 137–139, and 150–152 each bind substrate; these read RGGQVTYH, SLG, and GIA. The active-site Acyl-thioester intermediate is cysteine 168.

It belongs to the LipB family.

It is found in the cytoplasm. It catalyses the reaction octanoyl-[ACP] + L-lysyl-[protein] = N(6)-octanoyl-L-lysyl-[protein] + holo-[ACP] + H(+). It participates in protein modification; protein lipoylation via endogenous pathway; protein N(6)-(lipoyl)lysine from octanoyl-[acyl-carrier-protein]: step 1/2. Its function is as follows. Catalyzes the transfer of endogenously produced octanoic acid from octanoyl-acyl-carrier-protein onto the lipoyl domains of lipoate-dependent enzymes. Lipoyl-ACP can also act as a substrate although octanoyl-ACP is likely to be the physiological substrate. This chain is Octanoyltransferase, found in Francisella tularensis subsp. mediasiatica (strain FSC147).